The following is a 427-amino-acid chain: Trigger factor (427 aa).

Positions 163-248 (GDTVVIDFVG…IHEVKTKEVP (86 aa)) constitute a PPIase FKBP-type domain.

The protein belongs to the FKBP-type PPIase family. Tig subfamily.

It is found in the cytoplasm. It catalyses the reaction [protein]-peptidylproline (omega=180) = [protein]-peptidylproline (omega=0). Involved in protein export. Acts as a chaperone by maintaining the newly synthesized protein in an open conformation. Functions as a peptidyl-prolyl cis-trans isomerase. In Streptococcus agalactiae serotype Ia (strain ATCC 27591 / A909 / CDC SS700), this protein is Trigger factor.